The following is a 661-amino-acid chain: Acetyl-coenzyme A synthetase (661 aa).

Residues 197-200 (RGGK) and threonine 320 contribute to the CoA site. ATP is bound by residues 396–398 (GEP), 420–425 (DTWWQT), aspartate 511, and arginine 526. Residue serine 534 coordinates CoA. Arginine 537 serves as a coordination point for ATP. Positions 548 and 553 each coordinate Mg(2+). N6-acetyllysine is present on lysine 620.

This sequence belongs to the ATP-dependent AMP-binding enzyme family. Mg(2+) serves as cofactor. In terms of processing, acetylated. Deacetylation by the SIR2-homolog deacetylase activates the enzyme.

It catalyses the reaction acetate + ATP + CoA = acetyl-CoA + AMP + diphosphate. Functionally, catalyzes the conversion of acetate into acetyl-CoA (AcCoA), an essential intermediate at the junction of anabolic and catabolic pathways. AcsA undergoes a two-step reaction. In the first half reaction, AcsA combines acetate with ATP to form acetyl-adenylate (AcAMP) intermediate. In the second half reaction, it can then transfer the acetyl group from AcAMP to the sulfhydryl group of CoA, forming the product AcCoA. This is Acetyl-coenzyme A synthetase from Leptospira interrogans serogroup Icterohaemorrhagiae serovar copenhageni (strain Fiocruz L1-130).